The primary structure comprises 354 residues: Lariat debranching enzyme (354 aa).

3 residues coordinate a divalent metal cation: Cys-14, His-16, and Asp-45. RNA contacts are provided by Lys-59, Asn-90, His-91, Lys-134, and His-156. Asn-90 provides a ligand contact to a divalent metal cation. The segment at 130–158 (SGIYKSFDEKKPYTYPPSPNDVVSLFHTR) is lariat recognition loop. His-180 serves as a coordination point for a divalent metal cation. RNA contacts are provided by Gly-201, Asp-205, His-230, Met-231, and His-232. His-230 provides a ligand contact to a divalent metal cation. His-232 is an a divalent metal cation binding site.

The protein belongs to the lariat debranching enzyme family. Fe(2+) serves as cofactor. Zn(2+) is required as a cofactor. It depends on Mn(2+) as a cofactor.

It is found in the cytoplasm. It localises to the perinuclear region. Its activity is regulated as follows. Active in presence of diverse metals including Fe(2+), Zn(2+) and Mn(2+). Binds two metal cations in two adjacent alpha and beta metal-binding pockets. The activity is the highest with Fe(2+) bound to the 2 metal-binding sites. The activity is slightly lower with Fe(2+) bound to the beta site and Zn(2+) to the alpha site and decreases further when only Zn(2+) is bound. No activity with Mn(2+). However, another study showed activity with Mn(2+) bound to the beta site and Zn(2+) to the alpha site. Mn(2+) appears unable to bind to the alpha site. Its function is as follows. Cleaves the 2'-5' phosphodiester linkage at the branch point of excised lariat intron RNA and converts them into linear molecules that can be subsequently degraded, thereby facilitating ribonucleotide turnover. This Entamoeba histolytica (strain ATCC 30459 / HM-1:IMSS / ABRM) protein is Lariat debranching enzyme.